The following is a 792-amino-acid chain: Receptor-like protein 54 (792 aa).

An N-terminal signal peptide occupies residues 1-21; sequence MKSNLAVFFITCFFCCVFVTS. Residues 22-758 are Extracellular-facing; that stretch reads DSVYTLPFPF…PKQEHALNWK (737 aa). N-linked (GlcNAc...) asparagine glycans are attached at residues asparagine 68 and asparagine 107. LRR repeat units lie at residues 114–137, 139–162, 163–187, 189–209, 211–233, 235–258, 259–282, 283–302, 303–324, 325–349, 351–374, and 375–399; these read QHLR…GFGR, TYLE…ISNL, SRLT…SLTL, ENID…LFTM, FLVS…NYSA, SKLL…ISKL, ANLI…FLLF, KSLV…GTGS, ENLT…FIKD, LQRL…LWTL, SMLH…IILN, and SSIS…PYVN. N-linked (GlcNAc...) asparagine glycosylation occurs at asparagine 161. A glycan (N-linked (GlcNAc...) asparagine) is linked at asparagine 230. Residues asparagine 304 and asparagine 314 are each glycosylated (N-linked (GlcNAc...) asparagine). 2 N-linked (GlcNAc...) asparagine glycosylation sites follow: asparagine 356 and asparagine 374. An LRR 13; degenerate repeat occupies 400-418; that stretch reads IMAASNNYFTGGIPLIFCK. LRR repeat units follow at residues 419-443, 444-470, 472-489, and 490-515; these read RYRL…LTNV, SLGL…RLVL, DVGH…LVNC, and TTLK…ALTR. 5 N-linked (GlcNAc...) asparagine glycosylation sites follow: asparagine 431, asparagine 442, asparagine 454, asparagine 488, and asparagine 503. One copy of the LRR 18; degenerate repeat lies at 516-536; that stretch reads LEIIVLRSNRFHGPISSPEVS. 5 LRR repeats span residues 539 to 563, 614 to 637, 638 to 661, 662 to 685, and 687 to 709; these read FTAL…YFAN, DTYT…IGDL, KSLI…LAKL, KQLE…LREL, and FLGY…TQVG. Asparagine 553 and asparagine 563 each carry an N-linked (GlcNAc...) asparagine glycan. A glycan (N-linked (GlcNAc...) asparagine) is linked at asparagine 647. An N-linked (GlcNAc...) asparagine glycan is attached at asparagine 692. A helical transmembrane segment spans residues 759–779; it reads AAAIGYGPGVLFGLAIGQAFA. The Cytoplasmic portion of the chain corresponds to 780–792; it reads RYKPVLFYKLFRL.

It belongs to the RLP family.

The protein localises to the cell membrane. The protein is Receptor-like protein 54 of Arabidopsis thaliana (Mouse-ear cress).